We begin with the raw amino-acid sequence, 98 residues long: Integration host factor subunit alpha (98 aa).

Belongs to the bacterial histone-like protein family. In terms of assembly, heterodimer of an alpha and a beta chain.

Functionally, this protein is one of the two subunits of integration host factor, a specific DNA-binding protein that functions in genetic recombination as well as in transcriptional and translational control. The polypeptide is Integration host factor subunit alpha (Marinomonas sp. (strain MWYL1)).